The sequence spans 121 residues: Dihydroneopterin aldolase (121 aa).

2 residues coordinate substrate: glutamate 25 and methionine 114.

It belongs to the archaeal dihydroneopterin aldolase family. Homotetramer.

It carries out the reaction 7,8-dihydroneopterin = 6-hydroxymethyl-7,8-dihydropterin + glycolaldehyde. The protein operates within cofactor biosynthesis; 5,6,7,8-tetrahydromethanopterin biosynthesis. In terms of biological role, catalyzes the conversion of 7,8-dihydroneopterin (H2Neo) to 6-hydroxymethyl-7,8-dihydropterin (6-HMD). The chain is Dihydroneopterin aldolase from Methanocaldococcus jannaschii (strain ATCC 43067 / DSM 2661 / JAL-1 / JCM 10045 / NBRC 100440) (Methanococcus jannaschii).